The primary structure comprises 416 residues: Adenylosuccinate synthetase (416 aa).

GTP-binding positions include 11 to 17 (GDEGKGK) and 39 to 41 (GHT). Residue D12 is the Proton acceptor of the active site. The Mg(2+) site is built by D12 and G39. IMP contacts are provided by residues 12–15 (DEGK), 37–40 (NAGH), T125, R139, Q214, T229, and R290. The Proton donor role is filled by H40. Substrate is bound at residue 286-292 (TTTGRPR). GTP is bound by residues R292, 318-320 (KLD), and 405-407 (SLG).

It belongs to the adenylosuccinate synthetase family. Homodimer. Mg(2+) is required as a cofactor.

The protein localises to the cytoplasm. The enzyme catalyses IMP + L-aspartate + GTP = N(6)-(1,2-dicarboxyethyl)-AMP + GDP + phosphate + 2 H(+). The protein operates within purine metabolism; AMP biosynthesis via de novo pathway; AMP from IMP: step 1/2. In terms of biological role, plays an important role in the de novo pathway of purine nucleotide biosynthesis. Catalyzes the first committed step in the biosynthesis of AMP from IMP. The protein is Adenylosuccinate synthetase of Picrophilus torridus (strain ATCC 700027 / DSM 9790 / JCM 10055 / NBRC 100828 / KAW 2/3).